The following is a 507-amino-acid chain: Subtilisin-like protease 1 (507 aa).

The N-terminal stretch at 1-19 is a signal peptide; sequence MGVFRFISISLAAVSAANA. Positions 20 to 116 are excised as a propeptide; that stretch reads AQILSMPHAQ…VEPDTIISVN (97 aa). In terms of domain architecture, Inhibitor I9 spans 34-113; sequence SYIVMMKDDT…VMFVEPDTII (80 aa). Positions 126 to 400 constitute a Peptidase S8 domain; the sequence is SWGLARISNS…NVLISNGGAK (275 aa). Active-site charge relay system residues include Asp-158 and His-190. The segment at 175–198 is disordered; the sequence is GSNQVNDGDDRDGSGHGTHTSGTM. Residue Asn-251 is glycosylated (N-linked (GlcNAc...) asparagine). Polar residues predominate over residues 282-294; that stretch reads NENQDARSSSPAS. The disordered stretch occupies residues 282 to 312; sequence NENQDARSSSPASEPSVCTVGSSAEDDSRSS. The Charge relay system role is filled by Ser-345. The segment covering 378–394 has biased composition (polar residues); it reads SSSITDVGPGTPTNVLI. The disordered stretch occupies residues 378-486; sequence SSSITDVGPG…YPGGDNFDFD (109 aa). 2 stretches are compositionally biased toward pro residues: residues 405-428 and 438-449; these read KPAPGPSPNPSQPSEPQQPAPSQP and EPFPGEPFPGEP. Over residues 450–461 the composition is skewed to low complexity; sequence FPGESSPGESAP. Over residues 462–476 the composition is skewed to pro residues; it reads APAPMPPSPQHPHTP.

This sequence belongs to the peptidase S8 family.

It localises to the secreted. Secreted subtilisin-like serine protease with keratinolytic activity that contributes to pathogenicity. The sequence is that of Subtilisin-like protease 1 (SUB1) from Trichophyton equinum (Horse ringworm fungus).